Reading from the N-terminus, the 235-residue chain is Peptidyl-tRNA hydrolase (235 aa).

Tyr-14 contributes to the tRNA binding site. The Proton acceptor role is filled by His-19. Phe-64, Asn-66, and Asn-112 together coordinate tRNA. The interval 188-235 (APARNSGTRPDNPGKGSPEKPAAKPANDPIAEPPSLSDRLRALTERFR) is disordered. Over residues 225–235 (DRLRALTERFR) the composition is skewed to basic and acidic residues.

This sequence belongs to the PTH family. As to quaternary structure, monomer.

Its subcellular location is the cytoplasm. It carries out the reaction an N-acyl-L-alpha-aminoacyl-tRNA + H2O = an N-acyl-L-amino acid + a tRNA + H(+). Functionally, hydrolyzes ribosome-free peptidyl-tRNAs (with 1 or more amino acids incorporated), which drop off the ribosome during protein synthesis, or as a result of ribosome stalling. Catalyzes the release of premature peptidyl moieties from peptidyl-tRNA molecules trapped in stalled 50S ribosomal subunits, and thus maintains levels of free tRNAs and 50S ribosomes. The protein is Peptidyl-tRNA hydrolase of Paracoccus denitrificans (strain Pd 1222).